The sequence spans 188 residues: UPF0301 protein Mmwyl1_0539 (188 aa).

The protein belongs to the UPF0301 (AlgH) family.

This is UPF0301 protein Mmwyl1_0539 from Marinomonas sp. (strain MWYL1).